A 792-amino-acid chain; its full sequence is Kinesin-like protein KIF3C (792 aa).

The Kinesin motor domain occupies 10 to 363 (ALKVVARCRP…LRFANRAKNI (354 aa)). 97–104 (GQTGTGKT) is a binding site for ATP. 3 disordered regions span residues 249–287 (GSER…RPKE), 397–418 (MLGK…APAG), and 749–792 (RPST…LDHE). Low complexity predominate over residues 257–268 (GPNTTGGTATQP). Residues 269–282 (TGGGGGGGGGGGGG) show a composition bias toward gly residues. Residues 374–627 (KDTLLREFQE…QNEQTRELKL (254 aa)) adopt a coiled-coil conformation. Residues 397-412 (MLGKRLRRKSSRRKKA) are compositionally biased toward basic residues. Positions 628-792 (KYLIIENFIP…LRPTTVLDHE (165 aa)) are globular. The span at 773–792 (AHASLAASAALRPTTVLDHE) shows a compositional bias: low complexity.

Belongs to the TRAFAC class myosin-kinesin ATPase superfamily. Kinesin family. Kinesin II subfamily. In terms of assembly, heterodimer of KIF3A and KIF3C.

The protein localises to the cytoplasm. It localises to the cytoskeleton. Microtubule-based anterograde translocator for membranous organelles. In Bos taurus (Bovine), this protein is Kinesin-like protein KIF3C (KIF3C).